We begin with the raw amino-acid sequence, 460 residues long: Hydroxymethylglutaryl-CoA synthase erg13B (460 aa).

The active-site Proton donor/acceptor is the E86. Residue C120 is the Acyl-thioester intermediate of the active site. (3S)-3-hydroxy-3-methylglutaryl-CoA contacts are provided by C120, T162, S212, H263, K272, N340, and S374. Catalysis depends on H263, which acts as the Proton donor/acceptor.

It belongs to the thiolase-like superfamily. HMG-CoA synthase family.

The catalysed reaction is acetoacetyl-CoA + acetyl-CoA + H2O = (3S)-3-hydroxy-3-methylglutaryl-CoA + CoA + H(+). The protein operates within metabolic intermediate biosynthesis; (R)-mevalonate biosynthesis; (R)-mevalonate from acetyl-CoA: step 2/3. In terms of biological role, hydroxymethylglutaryl-CoA synthase; part of the first module of ergosterol biosynthesis pathway that includes the early steps of the pathway, conserved across all eukaryotes, and which results in the formation of mevalonate from acetyl-coenzyme A (acetyl-CoA). Erg13A and erg13B condense acetyl-CoA with acetoacetyl-CoA to form hydroxymethylglutaryl-CoA (HMG-CoA). The first module starts with the action of the cytosolic acetyl-CoA acetyltransferase erg10B that catalyzes the formation of acetoacetyl-CoA. The hydroxymethylglutaryl-CoA synthases erg13A and erg13B then condense acetyl-CoA with acetoacetyl-CoA to form HMG-CoA. The rate-limiting step of the early module is the reduction to mevalonate by the 3-hydroxy-3-methylglutaryl-coenzyme A (HMG-CoA) reductases hmg1 and hmg2. Mevalonate is also a precursor for the extracellular siderophore triacetylfusarinine C (TAFC). In Aspergillus fumigatus (strain ATCC MYA-4609 / CBS 101355 / FGSC A1100 / Af293) (Neosartorya fumigata), this protein is Hydroxymethylglutaryl-CoA synthase erg13B.